A 180-amino-acid polypeptide reads, in one-letter code: ATP-dependent protease subunit HslV (180 aa).

Thr-5 is an active-site residue. Na(+) is bound by residues Gly-161, Cys-164, and Thr-167.

This sequence belongs to the peptidase T1B family. HslV subfamily. A double ring-shaped homohexamer of HslV is capped on each side by a ring-shaped HslU homohexamer. The assembly of the HslU/HslV complex is dependent on binding of ATP.

It is found in the cytoplasm. The enzyme catalyses ATP-dependent cleavage of peptide bonds with broad specificity.. With respect to regulation, allosterically activated by HslU binding. Its function is as follows. Protease subunit of a proteasome-like degradation complex believed to be a general protein degrading machinery. The protein is ATP-dependent protease subunit HslV of Campylobacter lari (strain RM2100 / D67 / ATCC BAA-1060).